Here is a 149-residue protein sequence, read N- to C-terminus: 1,4-dihydroxy-2-naphthoyl-CoA hydrolase (149 aa).

Residue Asp-19 is part of the active site.

This sequence belongs to the 4-hydroxybenzoyl-CoA thioesterase family. DHNA-CoA hydrolase subfamily.

It catalyses the reaction 1,4-dihydroxy-2-naphthoyl-CoA + H2O = 1,4-dihydroxy-2-naphthoate + CoA + H(+). The protein operates within cofactor biosynthesis; phylloquinone biosynthesis. It participates in quinol/quinone metabolism; 1,4-dihydroxy-2-naphthoate biosynthesis; 1,4-dihydroxy-2-naphthoate from chorismate: step 7/7. In terms of biological role, catalyzes the hydrolysis of 1,4-dihydroxy-2-naphthoyl-CoA (DHNA-CoA) to 1,4-dihydroxy-2-naphthoate (DHNA), a reaction involved in phylloquinone (vitamin K1) biosynthesis. The protein is 1,4-dihydroxy-2-naphthoyl-CoA hydrolase of Synechococcus sp. (strain CC9605).